The chain runs to 154 residues: Myoglobin (154 aa).

The 147-residue stretch at 2–148 (GLSDGEWQLV…FRNDMAAQYK (147 aa)) folds into the Globin domain. Residue Ser-4 is modified to Phosphoserine. Position 65 (His-65) interacts with nitrite. An O2-binding site is contributed by His-65. Thr-68 bears the Phosphothreonine mark. His-94 contacts heme b.

Belongs to the globin family. As to quaternary structure, monomeric.

The protein localises to the cytoplasm. It localises to the sarcoplasm. It catalyses the reaction Fe(III)-heme b-[protein] + nitric oxide + H2O = Fe(II)-heme b-[protein] + nitrite + 2 H(+). The enzyme catalyses H2O2 + AH2 = A + 2 H2O. Its function is as follows. Monomeric heme protein which primary function is to store oxygen and facilitate its diffusion within muscle tissues. Reversibly binds oxygen through a pentacoordinated heme iron and enables its timely and efficient release as needed during periods of heightened demand. Depending on the oxidative conditions of tissues and cells, and in addition to its ability to bind oxygen, it also has a nitrite reductase activity whereby it regulates the production of bioactive nitric oxide. Under stress conditions, like hypoxia and anoxia, it also protects cells against reactive oxygen species thanks to its pseudoperoxidase activity. This chain is Myoglobin (MB), found in Bos mutus grunniens (Wild yak).